A 252-amino-acid chain; its full sequence is tRNA (guanine-N(1)-)-methyltransferase (252 aa).

S-adenosyl-L-methionine is bound by residues glycine 118 and isoleucine 138–leucine 143.

It belongs to the RNA methyltransferase TrmD family. As to quaternary structure, homodimer.

Its subcellular location is the cytoplasm. It carries out the reaction guanosine(37) in tRNA + S-adenosyl-L-methionine = N(1)-methylguanosine(37) in tRNA + S-adenosyl-L-homocysteine + H(+). Specifically methylates guanosine-37 in various tRNAs. This chain is tRNA (guanine-N(1)-)-methyltransferase, found in Pseudomonas paraeruginosa (strain DSM 24068 / PA7) (Pseudomonas aeruginosa (strain PA7)).